We begin with the raw amino-acid sequence, 638 residues long: Threonine--tRNA ligase (638 aa).

The 61-residue stretch at 1–61 (MPIITLPDGS…NKDSKVVIIT (61 aa)) folds into the TGS domain. The tract at residues 242–533 (DHRKLGKKHS…LIEQYEAKFP (292 aa)) is catalytic. 3 residues coordinate Zn(2+): Cys-333, His-384, and His-510.

This sequence belongs to the class-II aminoacyl-tRNA synthetase family. As to quaternary structure, homodimer. The cofactor is Zn(2+).

The protein localises to the cytoplasm. It catalyses the reaction tRNA(Thr) + L-threonine + ATP = L-threonyl-tRNA(Thr) + AMP + diphosphate + H(+). Its function is as follows. Catalyzes the attachment of threonine to tRNA(Thr) in a two-step reaction: L-threonine is first activated by ATP to form Thr-AMP and then transferred to the acceptor end of tRNA(Thr). Also edits incorrectly charged L-seryl-tRNA(Thr). The protein is Threonine--tRNA ligase of Prochlorococcus marinus (strain MIT 9301).